The primary structure comprises 162 residues: Peroxiredoxin-2B (162 aa).

The Thioredoxin domain maps to 4 to 162 (IAVGDVVPDG…SSADDILKAL (159 aa)). The Cysteine sulfenic acid (-SOH) intermediate role is filled by cysteine 51.

This sequence belongs to the peroxiredoxin family. Prx5 subfamily. Monomer. As to expression, expressed in all tissues but mostly in reproductive tissues such as buds, flowers, siliques and seeds.

The protein localises to the cytoplasm. The enzyme catalyses [glutaredoxin]-dithiol + a hydroperoxide = [glutaredoxin]-disulfide + an alcohol + H2O. In terms of biological role, reduces hydrogen peroxide and alkyl hydroperoxides with reducing equivalents provided through the thioredoxin or glutaredoxin system. May be involved in intracellular redox signaling. Thiol-specific peroxidase that catalyzes the reduction of hydrogen peroxide and organic hydroperoxides to water and alcohols, respectively. Plays a role in cell protection against oxidative stress by detoxifying peroxides and as sensor of hydrogen peroxide-mediated signaling events. The polypeptide is Peroxiredoxin-2B (PRXIIB) (Arabidopsis thaliana (Mouse-ear cress)).